Reading from the N-terminus, the 197-residue chain is Large ribosomal subunit protein bL25 (197 aa).

This sequence belongs to the bacterial ribosomal protein bL25 family. CTC subfamily. Part of the 50S ribosomal subunit; part of the 5S rRNA/L5/L18/L25 subcomplex. Contacts the 5S rRNA. Binds to the 5S rRNA independently of L5 and L18.

Functionally, this is one of the proteins that binds to the 5S RNA in the ribosome where it forms part of the central protuberance. In Streptomyces avermitilis (strain ATCC 31267 / DSM 46492 / JCM 5070 / NBRC 14893 / NCIMB 12804 / NRRL 8165 / MA-4680), this protein is Large ribosomal subunit protein bL25.